Here is a 165-residue protein sequence, read N- to C-terminus: Large ribosomal subunit protein uL11 (165 aa).

At serine 38 the chain carries Phosphoserine. Lysine 40 participates in a covalent cross-link: Glycyl lysine isopeptide (Lys-Gly) (interchain with G-Cter in SUMO2). A Glycyl lysine isopeptide (Lys-Gly) (interchain with G-Cter in ubiquitin) cross-link involves residue lysine 48. Residue lysine 54 is modified to N6-acetyllysine. A Glycyl lysine isopeptide (Lys-Gly) (interchain with G-Cter in ubiquitin) cross-link involves residue lysine 83. Phosphoserine is present on serine 165.

It belongs to the universal ribosomal protein uL11 family. In terms of assembly, component of the large ribosomal subunit. Mature ribosomes consist of a small (40S) and a large (60S) subunit. The 40S subunit contains about 33 different proteins and 1 molecule of RNA (18S). The 60S subunit contains about 49 different proteins and 3 molecules of RNA (28S, 5.8S and 5S). Post-translationally, ubiquitinated at Lys-48 and Lys-83 by RNF14 and RNF25 in response to ribosome collisions (ribosome stalling).

It localises to the cytoplasm. Component of the large ribosomal subunit. The ribosome is a large ribonucleoprotein complex responsible for the synthesis of proteins in the cell. Binds directly to 26S ribosomal RNA. This chain is Large ribosomal subunit protein uL11 (Rpl12), found in Mus musculus (Mouse).